The following is a 164-amino-acid chain: 2-C-methyl-D-erythritol 2,4-cyclodiphosphate synthase (164 aa).

A divalent metal cation-binding residues include D9 and H11. 4-CDP-2-C-methyl-D-erythritol 2-phosphate is bound by residues 9 to 11 (DAH) and 36 to 37 (HS). Position 44 (H44) interacts with a divalent metal cation. Residues 58–60 (DLG), 63–67 (FPDSD), 134–137 (TTTE), F141, and R144 contribute to the 4-CDP-2-C-methyl-D-erythritol 2-phosphate site.

The protein belongs to the IspF family. As to quaternary structure, homotrimer. A divalent metal cation serves as cofactor.

It catalyses the reaction 4-CDP-2-C-methyl-D-erythritol 2-phosphate = 2-C-methyl-D-erythritol 2,4-cyclic diphosphate + CMP. It functions in the pathway isoprenoid biosynthesis; isopentenyl diphosphate biosynthesis via DXP pathway; isopentenyl diphosphate from 1-deoxy-D-xylulose 5-phosphate: step 4/6. Functionally, involved in the biosynthesis of isopentenyl diphosphate (IPP) and dimethylallyl diphosphate (DMAPP), two major building blocks of isoprenoid compounds. Catalyzes the conversion of 4-diphosphocytidyl-2-C-methyl-D-erythritol 2-phosphate (CDP-ME2P) to 2-C-methyl-D-erythritol 2,4-cyclodiphosphate (ME-CPP) with a corresponding release of cytidine 5-monophosphate (CMP). This chain is 2-C-methyl-D-erythritol 2,4-cyclodiphosphate synthase, found in Alkalilimnicola ehrlichii (strain ATCC BAA-1101 / DSM 17681 / MLHE-1).